Reading from the N-terminus, the 398-residue chain is Metal tolerance protein 1 (398 aa).

Residues 1 to 56 lie on the Cytoplasmic side of the membrane; sequence MESSSPHHSHIVEVNVGKSDEERIIVASKVCGEAPCGFSDSKNASGDAHERSASMR. Residues 57–77 form a helical membrane-spanning segment; it reads KLCIAVVLCLVFMSVEVVGGI. Residues 78 to 89 are Vacuolar-facing; it reads KANSLAILTDAA. A helical transmembrane segment spans residues 90–110; sequence HLLSDVAAFAISLFSLWAAGW. At 111–122 the chain is on the cytoplasmic side; that stretch reads EATPRQTYGFFR. The chain crosses the membrane as a helical span at residues 123–143; the sequence is IEILGALVSIQLIWLLTGILV. Topologically, residues 144–159 are vacuolar; that stretch reads YEAIIRIVTETSEVNG. A helical membrane pass occupies residues 160–180; it reads FLMFLVAAFGLVVNIIMAVLL. The Cytoplasmic portion of the chain corresponds to 181–263; that stretch reads GHDHGHSHGH…KRNINLQGAY (83 aa). Positions 182–232 are required for zinc-binding; sequence HDHGHSHGHGHGHGHDHHNHSHGVTVTTHHHHHDHEHGHSHGHGEDKHHAH. The segment at 186–232 is disordered; it reads HSHGHGHGHGHDHHNHSHGVTVTTHHHHHDHEHGHSHGHGEDKHHAH. Basic residues predominate over residues 187–202; that stretch reads SHGHGHGHGHDHHNHS. Positions 216–232 are enriched in basic and acidic residues; it reads HEHGHSHGHGEDKHHAH. Residues 264-284 form a helical membrane-spanning segment; the sequence is LHVLGDSIQSVGVMIGGAIIW. The Vacuolar portion of the chain corresponds to 285–290; it reads YNPEWK. Residues 291–311 traverse the membrane as a helical segment; that stretch reads IVDLICTLAFSVIVLGTTINM. At 312–398 the chain is on the cytoplasmic side; that stretch reads IRNILEVLME…ISHVTIQIER (87 aa).

Belongs to the cation diffusion facilitator (CDF) transporter (TC 2.A.4) family. SLC30A subfamily. Ubiquitously expressed at low levels.

It is found in the vacuole membrane. Its function is as follows. Mediates zinc accumulation in roots and confers resistance to zinc. Involved in sequestration of excess zinc in the cytoplasm into vacuoles to maintain zinc homeostasis. Can also transport cadmium with a low efficiency. The polypeptide is Metal tolerance protein 1 (Arabidopsis thaliana (Mouse-ear cress)).